Reading from the N-terminus, the 214-residue chain is 3-demethoxyubiquinol 3-hydroxylase (214 aa).

The Fe cation site is built by Glu63, Glu93, His96, Glu145, Glu177, and His180.

It belongs to the COQ7 family. Fe cation serves as cofactor.

It is found in the cell membrane. The enzyme catalyses a 5-methoxy-2-methyl-3-(all-trans-polyprenyl)benzene-1,4-diol + AH2 + O2 = a 3-demethylubiquinol + A + H2O. It functions in the pathway cofactor biosynthesis; ubiquinone biosynthesis. Its function is as follows. Catalyzes the hydroxylation of 2-nonaprenyl-3-methyl-6-methoxy-1,4-benzoquinol during ubiquinone biosynthesis. The protein is 3-demethoxyubiquinol 3-hydroxylase of Psychrobacter arcticus (strain DSM 17307 / VKM B-2377 / 273-4).